The chain runs to 1447 residues: Regulator of G-protein signaling 12 (1447 aa).

Residues M1–R21 form a disordered region. A PDZ domain is found at S22 to G98. S172 and S195 each carry phosphoserine. A Glycyl lysine isopeptide (Lys-Gly) (interchain with G-Cter in SUMO2) cross-link involves residue K196. The 113-residue stretch at V228–F340 folds into the PID domain. Disordered stretches follow at residues A410–F429 and L443–G482. Polar residues predominate over residues H413–G425. The span at G451–G464 shows a compositional bias: gly residues. Residues R524 and R633 each carry the omega-N-methylarginine modification. Positions N618 to R652 are disordered. Phosphoserine occurs at positions 661 and 671. Positions S715 to I832 constitute an RGS domain. A compositionally biased stretch (polar residues) spans D843–S853. A disordered region spans residues D843–A941. Phosphoserine occurs at positions 850 and 879. Residues E914–L923 are compositionally biased toward basic and acidic residues. S943 is modified (phosphoserine). 2 RBD domains span residues K962–R1032 and L1034–K1104. The segment covering E1103–K1117 has biased composition (basic and acidic residues). The segment at E1103–E1169 is disordered. Positions K1122 to A1136 are enriched in polar residues. The segment covering I1151–E1169 has biased composition (basic and acidic residues). The GoLoco domain maps to A1187 to L1209. The disordered stretch occupies residues G1240–V1447. The span at R1244–G1258 shows a compositional bias: polar residues. 2 stretches are compositionally biased toward low complexity: residues S1267–S1280 and P1289–P1298. Positions T1301–T1313 are enriched in polar residues.

Interacts with GNAI1. Interacts with GNAI2 and GNAI3; the interactions are GDP-dependent. Isoform 3 is brain specific.

It is found in the nucleus. It localises to the cytoplasm. Its subcellular location is the cell projection. The protein localises to the dendrite. The protein resides in the synapse. It is found in the nucleus matrix. Its function is as follows. Regulates G protein-coupled receptor signaling cascades. Inhibits signal transduction by increasing the GTPase activity of G protein alpha subunits, thereby driving them into their inactive GDP-bound form. Functionally, behaves as a cell cycle-dependent transcriptional repressor, promoting inhibition of S-phase DNA synthesis. The polypeptide is Regulator of G-protein signaling 12 (RGS12) (Homo sapiens (Human)).